The following is a 580-amino-acid chain: Rap guanine nucleotide exchange factor 5 (580 aa).

An N-terminal Ras-GEF domain is found at 67 to 200 (DRYVVVSGTP…ELKEFQKILG (134 aa)). The Ras-GEF domain occupies 344 to 579 (NTWDLALELM…FELSHRLEPR (236 aa)).

In the embryo, expressed in young neurons of the developing telencephalon, diencephalon and hindbrain. Not expressed in progenitor cells in the ventricular zone.

The protein resides in the nucleus. Functionally, guanine nucleotide exchange factor (GEF) for RAP1A, RAP2A and MRAS/M-Ras-GTP. Its association with MRAS inhibits Rap1 activation. The protein is Rap guanine nucleotide exchange factor 5 (Rapgef5) of Rattus norvegicus (Rat).